The chain runs to 208 residues: Outer-membrane lipoprotein carrier protein (208 aa).

Residues 1 to 21 (MRLIRTLFVAALAMGTSLAHA) form the signal peptide.

The protein belongs to the LolA family. Monomer.

It is found in the periplasm. Functionally, participates in the translocation of lipoproteins from the inner membrane to the outer membrane. Only forms a complex with a lipoprotein if the residue after the N-terminal Cys is not an aspartate (The Asp acts as a targeting signal to indicate that the lipoprotein should stay in the inner membrane). This is Outer-membrane lipoprotein carrier protein from Pseudomonas paraeruginosa (strain DSM 24068 / PA7) (Pseudomonas aeruginosa (strain PA7)).